Reading from the N-terminus, the 79-residue chain is Spidroin-1 (79 aa).

This sequence belongs to the silk fibroin family. As to quaternary structure, major subunit, with spidroin 2, of the dragline silk.

The protein resides in the secreted. The protein localises to the extracellular space. Spiders' major ampullate silk possesses unique characteristics of strength and elasticity. Fibroin consists of pseudocrystalline regions of antiparallel beta-sheet interspersed with elastic amorphous segments. The sequence is that of Spidroin-1 from Araneus bicentenarius (Giant lichen orbweaver).